The sequence spans 61 residues: UPF0370 protein SG1720 (61 aa).

A helical membrane pass occupies residues 3–23 (WLADYWWVVLLVLAGMLIGGV). Basic and acidic residues predominate over residues 37–47 (NRPELPPHRDN). Residues 37-61 (NRPELPPHRDNNAQWDEEDDWPKKP) are disordered. The segment covering 51 to 61 (WDEEDDWPKKP) has biased composition (acidic residues).

The protein belongs to the UPF0370 family.

The protein resides in the cell membrane. This is UPF0370 protein SG1720 from Sodalis glossinidius (strain morsitans).